The chain runs to 63 residues: Beta-defensin 4 (63 aa).

A signal peptide spans 1-22 (MRLHHLLLAVLFLVLSAGSGFT). Pyrrolidone carboxylic acid is present on glutamine 23. 3 disulfide bridges follow: cysteine 31/cysteine 60, cysteine 38/cysteine 53, and cysteine 43/cysteine 61.

The protein belongs to the beta-defensin family. As to expression, neutrophilic granules.

The protein localises to the secreted. Has bactericidal activity. Active against E.coli ML35 and S.aureus 502A. This is Beta-defensin 4 (DEFB4) from Bos taurus (Bovine).